We begin with the raw amino-acid sequence, 315 residues long: Glutaminase (315 aa).

Residues serine 70, asparagine 120, glutamate 166, asparagine 173, tyrosine 197, tyrosine 249, and valine 267 each contribute to the substrate site.

It belongs to the glutaminase family. As to quaternary structure, homotetramer.

The catalysed reaction is L-glutamine + H2O = L-glutamate + NH4(+). The polypeptide is Glutaminase (Mesorhizobium japonicum (strain LMG 29417 / CECT 9101 / MAFF 303099) (Mesorhizobium loti (strain MAFF 303099))).